The sequence spans 149 residues: Large ribosomal subunit protein bL9 (149 aa).

It belongs to the bacterial ribosomal protein bL9 family.

Binds to the 23S rRNA. In Klebsiella pneumoniae subsp. pneumoniae (strain ATCC 700721 / MGH 78578), this protein is Large ribosomal subunit protein bL9.